Reading from the N-terminus, the 1053-residue chain is uncharacterized protein (1053 aa).

It belongs to the mycobacterial PPE family.

This is an uncharacterized protein from Mycobacterium tuberculosis (strain ATCC 25618 / H37Rv).